A 519-amino-acid polypeptide reads, in one-letter code: Lysine histidine transporter-like 8 (519 aa).

The interval 1 to 44 (MDERPETELISIPATPRVSTPEILTPSGQRSPRPATKPSSATWT) is disordered. Residues 1-114 (MDERPETELI…NLNAGVGFQA (114 aa)) lie on the Cytoplasmic side of the membrane. 2 consecutive transmembrane segments (helical) span residues 115 to 135 (LVLP…SLTI) and 136 to 156 (AYCW…AVPG). Topologically, residues 157–176 (KRYNRYVELAQAAFGERLGV) are cytoplasmic. The helical transmembrane segment at 177-197 (WLALFPTVYLSAGTATALILI) threads the bilayer. Over 198–217 (GGETMKLFFQIVCGPLCTSN) the chain is Extracellular. The chain crosses the membrane as a helical span at residues 218–238 (PLTTVEWYLVFTSLCIVLSQL). Residues 239–243 (PNLNS) lie on the Cytoplasmic side of the membrane. The helical transmembrane segment at 244 to 264 (IAGLSLIGAVTAITYSTMVWV) threads the bilayer. Residues 265–282 (LSVSQPRPATISYEPLSM) are Extracellular-facing. Residues 283 to 303 (PSTSGSLFAVLNALGIIAFAF) form a helical membrane-spanning segment. The Cytoplasmic portion of the chain corresponds to 304–333 (RGHNLVLEIQSTMPSTFKHPAHVPMWRGAK). Residues 334–354 (ISYFLIALCIFPISIGGFWAY) form a helical membrane-spanning segment. Residues 355 to 377 (GNLMPSGGMLAALYAFHIHDIPR) lie on the Extracellular side of the membrane. A helical transmembrane segment spans residues 378-398 (GLLATAFLLVVFSCLSSFQIY). Residues 399–427 (SMPAFDSFEAGYTSRTNKPCSIWVRSGFR) lie on the Cytoplasmic side of the membrane. Residues 428–448 (VFFGFVSFFIGVALPFLSSLA) traverse the membrane as a helical segment. A topological domain (extracellular) is located at residue G449. A helical transmembrane segment spans residues 450–470 (LLGGLTLPVTFAYPCFMWVLI). Residues 471 to 485 (KKPAKYSFNWYFHWG) are Cytoplasmic-facing. A helical membrane pass occupies residues 486–506 (LGWLGVAFSLAFSIGGIWSMV). The Extracellular segment spans residues 507–519 (TNGLKLKFFKPPN).

This sequence belongs to the amino acid/polyamine transporter 2 family. Amino acid/auxin permease (AAAP) (TC 2.A.18.2) subfamily.

The protein localises to the cell membrane. Amino acid transporter. In Arabidopsis thaliana (Mouse-ear cress), this protein is Lysine histidine transporter-like 8 (AATL1).